A 417-amino-acid chain; its full sequence is Adenylosuccinate synthetase (417 aa).

GTP is bound by residues 11-17 and 39-41; these read GDEGKGK and GHT. Asp12 acts as the Proton acceptor in catalysis. Residues Asp12 and Gly39 each contribute to the Mg(2+) site. Residues 12–15, 37–40, Thr126, Arg140, Gln218, Thr233, and Arg295 each bind IMP; these read DEGK and NAGH. The active-site Proton donor is His40. 291–297 is a substrate binding site; it reads TVSGRIR. GTP is bound by residues Arg297, 323-325, and 406-408; these read KLD and SNG.

It belongs to the adenylosuccinate synthetase family. Homodimer. It depends on Mg(2+) as a cofactor.

The protein resides in the cytoplasm. It catalyses the reaction IMP + L-aspartate + GTP = N(6)-(1,2-dicarboxyethyl)-AMP + GDP + phosphate + 2 H(+). It functions in the pathway purine metabolism; AMP biosynthesis via de novo pathway; AMP from IMP: step 1/2. In terms of biological role, plays an important role in the de novo pathway of purine nucleotide biosynthesis. Catalyzes the first committed step in the biosynthesis of AMP from IMP. The chain is Adenylosuccinate synthetase from Neorickettsia sennetsu (strain ATCC VR-367 / Miyayama) (Ehrlichia sennetsu).